Reading from the N-terminus, the 139-residue chain is HTH-type transcriptional repressor Mb2911 (139 aa).

An HTH marR-type domain is found at Asp6–Ser138.

In terms of assembly, homodimer.

In terms of biological role, represses expression of the HQNO methyltransferase htm gene by binding to its promoter region. This is HTH-type transcriptional repressor Mb2911 from Mycobacterium bovis (strain ATCC BAA-935 / AF2122/97).